We begin with the raw amino-acid sequence, 182 residues long: NADH-quinone oxidoreductase subunit B 1 (182 aa).

Residues Cys-47, Cys-48, Cys-113, and Cys-142 each coordinate [4Fe-4S] cluster.

Belongs to the complex I 20 kDa subunit family. NDH-1 is composed of 14 different subunits. Subunits NuoB, C, D, E, F, and G constitute the peripheral sector of the complex. It depends on [4Fe-4S] cluster as a cofactor.

Its subcellular location is the cell inner membrane. The enzyme catalyses a quinone + NADH + 5 H(+)(in) = a quinol + NAD(+) + 4 H(+)(out). Its function is as follows. NDH-1 shuttles electrons from NADH, via FMN and iron-sulfur (Fe-S) centers, to quinones in the respiratory chain. Couples the redox reaction to proton translocation (for every two electrons transferred, four hydrogen ions are translocated across the cytoplasmic membrane), and thus conserves the redox energy in a proton gradient. The sequence is that of NADH-quinone oxidoreductase subunit B 1 from Anaeromyxobacter dehalogenans (strain 2CP-C).